We begin with the raw amino-acid sequence, 380 residues long: Cytochrome b (380 aa).

4 helical membrane-spanning segments follow: residues 34-54 (FGSLLGICLMTQILTGLLLAM), 78-99 (WLIRNLHANGASFFFICIYLHI), 114-134 (WNTGVMLLLTLMATAFVGYVL), and 179-199 (FFALHFLLPFVIAGLTLIHLT). Positions 84 and 98 each coordinate heme b. Histidine 183 and histidine 197 together coordinate heme b. Histidine 202 is a binding site for a ubiquinone. 4 helical membrane passes run 227-247 (LKDILGFMFMLLPLTTLALFS), 289-309 (LGGVLALAASVLILFLVPFLH), 321-341 (LSQLLFWVLVANLLILTWVGS), and 348-368 (FIIIGQLASLTYFTILLILFP).

This sequence belongs to the cytochrome b family. In terms of assembly, the cytochrome bc1 complex contains 11 subunits: 3 respiratory subunits (MT-CYB, CYC1 and UQCRFS1), 2 core proteins (UQCRC1 and UQCRC2) and 6 low-molecular weight proteins (UQCRH/QCR6, UQCRB/QCR7, UQCRQ/QCR8, UQCR10/QCR9, UQCR11/QCR10 and a cleavage product of UQCRFS1). This cytochrome bc1 complex then forms a dimer. It depends on heme b as a cofactor.

The protein resides in the mitochondrion inner membrane. In terms of biological role, component of the ubiquinol-cytochrome c reductase complex (complex III or cytochrome b-c1 complex) that is part of the mitochondrial respiratory chain. The b-c1 complex mediates electron transfer from ubiquinol to cytochrome c. Contributes to the generation of a proton gradient across the mitochondrial membrane that is then used for ATP synthesis. The polypeptide is Cytochrome b (MT-CYB) (Pterodroma hypoleuca (Bonin petrel)).